A 388-amino-acid polypeptide reads, in one-letter code: 5-hydroxytryptamine receptor 4 (388 aa).

Residues 1–19 lie on the Extracellular side of the membrane; the sequence is MDKLDANVSSEEGFGSVEK. Asparagine 7 carries N-linked (GlcNAc...) asparagine glycosylation. The chain crosses the membrane as a helical span at residues 20–44; the sequence is VVLLTFLSTVILMAILGNLLVMVAV. The Cytoplasmic segment spans residues 45–54; it reads CWDRQLRKIK. The chain crosses the membrane as a helical span at residues 55–78; the sequence is TNYFIVSLAFADLLVSVLVMPFGA. Residues 79 to 92 lie on the Extracellular side of the membrane; sequence IELVQDIWIYGEVF. Residues 93 to 117 traverse the membrane as a helical segment; that stretch reads CLVRTSLDVLLTTASIFHLCCISLD. Cysteine 93 and cysteine 184 are disulfide-bonded. Aspartate 100 contributes to the serotonin binding site. Over 118–133 the chain is Cytoplasmic; sequence RYYAICCQPLVYRNKM. Residues 134-157 form a helical membrane-spanning segment; it reads TPLRIALMLGGCWVIPTFISFLPI. The Extracellular portion of the chain corresponds to 158–188; that stretch reads MQGWNNIGIIDLIEKRKFNQNSNSTYCVFMV. Residues 189–212 form a helical membrane-spanning segment; sequence NKPYAITCSVVAFYIPFLLMVLAY. Topologically, residues 213 to 257 are cytoplasmic; sequence YRIYVTAKEHAHQIQMLQRAGASSESRPQSADQHSTHRMRTETKA. Residues 258–283 form a helical membrane-spanning segment; it reads AKTLCIIMGCFCLCWAPFFVTNIVDP. Asparagine 279 contacts serotonin. Residues 284–290 are Extracellular-facing; that stretch reads FIDYTVP. Residues 291–314 traverse the membrane as a helical segment; the sequence is GQVWTAFLWLGYINSGLNPFLYAF. Over 315–388 the chain is Cytoplasmic; that stretch reads LNKSFRRAFL…PLVAAQPSDT (74 aa).

It belongs to the G-protein coupled receptor 1 family. As to quaternary structure, interacts (via C-terminus 330-346 AA) with GRK5; this interaction is promoted by 5-HT (serotonin). Interacts with MAGI2, MPP3, NHERF1 and SNX27 isoforms 1 and 2. Forms a complex including NHERF1 and EZR. In terms of assembly, interacts with PATJ, NOS1 and SEC23A. In terms of tissue distribution, expressed in ileum, brain, and atrium, but not in the ventricle. Mainly expressed in atria and cardiac ventricle. As to expression, expressed in all cardiovascular tissues analyzed.

It localises to the cell membrane. Its subcellular location is the endosome membrane. In terms of biological role, G-protein coupled receptor for 5-hydroxytryptamine (serotonin), a biogenic hormone that functions as a neurotransmitter, a hormone and a mitogen. Ligand binding causes a conformation change that triggers signaling via guanine nucleotide-binding proteins (G proteins) and modulates the activity of downstream effectors. HTR4 is coupled to G(s) G alpha proteins and mediates activation of adenylate cyclase activity. This Homo sapiens (Human) protein is 5-hydroxytryptamine receptor 4.